Consider the following 403-residue polypeptide: Cysteine desulfurase IscS (403 aa).

Residues 73–74 (AT), Asn-153, Gln-181, and 201–203 (SAH) each bind pyridoxal 5'-phosphate. N6-(pyridoxal phosphate)lysine is present on Lys-204. Thr-241 provides a ligand contact to pyridoxal 5'-phosphate. Cys-326 functions as the Cysteine persulfide intermediate in the catalytic mechanism. [2Fe-2S] cluster is bound at residue Cys-326.

It belongs to the class-V pyridoxal-phosphate-dependent aminotransferase family. NifS/IscS subfamily. Homodimer. Forms a heterotetramer with IscU, interacts with other sulfur acceptors. The cofactor is pyridoxal 5'-phosphate.

Its subcellular location is the cytoplasm. It carries out the reaction (sulfur carrier)-H + L-cysteine = (sulfur carrier)-SH + L-alanine. It functions in the pathway cofactor biosynthesis; iron-sulfur cluster biosynthesis. Master enzyme that delivers sulfur to a number of partners involved in Fe-S cluster assembly, tRNA modification or cofactor biosynthesis. Catalyzes the removal of elemental sulfur atoms from cysteine to produce alanine. Functions as a sulfur delivery protein for Fe-S cluster synthesis onto IscU, an Fe-S scaffold assembly protein, as well as other S acceptor proteins. The polypeptide is Cysteine desulfurase IscS (Methylococcus capsulatus (strain ATCC 33009 / NCIMB 11132 / Bath)).